A 278-amino-acid polypeptide reads, in one-letter code: MKI67 FHA domain-interacting nucleolar phosphoprotein-like (278 aa).

The RRM domain maps to 41–119 (GVIYIGHIPK…RLLKCEFVTP (79 aa)).

It localises to the nucleus. It is found in the nucleolus. The polypeptide is MKI67 FHA domain-interacting nucleolar phosphoprotein-like (nifk) (Xenopus laevis (African clawed frog)).